We begin with the raw amino-acid sequence, 304 residues long: Ribonuclease Z (304 aa).

Zn(2+)-binding residues include histidine 63, histidine 65, aspartate 67, histidine 68, histidine 141, aspartate 208, and histidine 266. The active-site Proton acceptor is aspartate 67.

Belongs to the RNase Z family. As to quaternary structure, homodimer. Zn(2+) serves as cofactor.

The enzyme catalyses Endonucleolytic cleavage of RNA, removing extra 3' nucleotides from tRNA precursor, generating 3' termini of tRNAs. A 3'-hydroxy group is left at the tRNA terminus and a 5'-phosphoryl group is left at the trailer molecule.. Its function is as follows. Zinc phosphodiesterase, which displays some tRNA 3'-processing endonuclease activity. Probably involved in tRNA maturation, by removing a 3'-trailer from precursor tRNA. This is Ribonuclease Z from Chlamydia trachomatis serovar L2 (strain ATCC VR-902B / DSM 19102 / 434/Bu).